The sequence spans 512 residues: Reduced folate transporter (512 aa).

Met-1 bears the N-acetylmethionine mark. Residues 1 to 29 (MVPTGQVAEKQAYEEPRQDHELKSWRCLV) are Cytoplasmic-facing. A helical transmembrane segment spans residues 30 to 50 (FYLCFFGFMAQLRPGESFITP). Folate-binding residues include Ile-48 and Thr-49. Over 51-62 (FLLERKFTKEQV) the chain is Extracellular. A helical transmembrane segment spans residues 63 to 85 (TNEIIPMLPYSHLAVLVPVFLLT). Over 86 to 89 (DYLR) the chain is Cytoplasmic. A helical membrane pass occupies residues 90 to 110 (YKPVLVLQCLSFVCVWLLLLL). The Extracellular portion of the chain corresponds to 111 to 114 (GTSV). The helical transmembrane segment at 115 to 137 (VHMQLMEVFYSVTMAARIAYSSY) threads the bilayer. Residues Glu-121 and Arg-131 each contribute to the folate site. Residues 138 to 151 (IFSLVHPSRYQRMA) lie on the Cytoplasmic side of the membrane. Residues 152 to 176 (SYSRAAVLLGVFISSVLGQALVTVG) form a helical membrane-spanning segment. Val-162 serves as a coordination point for folate. Residues 177 to 181 (HISTY) lie on the Extracellular side of the membrane. Residues 182–200 (TLNCVSLGFILFSLVLSLF) traverse the membrane as a helical segment. At 201-266 (LKRPKRSLFF…ELVENARQPQ (66 aa)) the chain is on the cytoplasmic side. A helical membrane pass occupies residues 267-292 (LRLWCLWWVFNSSGYYLITYYVHVLW). Residues Tyr-281, Tyr-282, and Tyr-286 each contribute to the folate site. At 293–300 (RSTDSSLS) the chain is on the extracellular side. Residues 301–323 (YNGAVDAASTLLSAITSFSAGFL) traverse the membrane as a helical segment. Topologically, residues 324–329 (SIRWTL) are cytoplasmic. A helical transmembrane segment spans residues 330–350 (WSKLVIAGVIAIQASLVFCMF). Residues 351-353 (QIR) are Extracellular-facing. A helical membrane pass occupies residues 354–377 (DIWVCYVTFVLFRGAYQFLVPIAT). Folate-binding residues include Arg-366 and Gln-370. Over 378–391 (FQIASSLSKELCAL) the chain is Cytoplasmic. The chain crosses the membrane as a helical span at residues 392–415 (VFGINTFLATALKTCITLVVSDKR). Residues 400–412 (ATALKTCITLVVS) form a required for substrate-binding region. At 416 to 423 (GLGLQVRD) the chain is on the extracellular side. A helical transmembrane segment spans residues 424 to 448 (QFRIYFIYFLMLSITCFAWAGLDGL). Residues 449 to 512 (RYCQRGRHQP…RGDLRVEAKA (64 aa)) lie on the Cytoplasmic side of the membrane. A phosphoserine mark is found at Ser-467, Ser-472, and Ser-477. Positions 478–512 (LQDGDLRGPQPSAPQLLSEDGMEDDRGDLRVEAKA) are disordered.

This sequence belongs to the reduced folate carrier (RFC) transporter (TC 2.A.48) family.

Its subcellular location is the cell membrane. The protein resides in the apical cell membrane. It is found in the basolateral cell membrane. It carries out the reaction 5-amino-1-(5-phospho-beta-D-ribosyl)imidazole-4-carboxamide(in) + (6S)-5-methyl-5,6,7,8-tetrahydrofolate(out) = 5-amino-1-(5-phospho-beta-D-ribosyl)imidazole-4-carboxamide(out) + (6S)-5-methyl-5,6,7,8-tetrahydrofolate(in). In terms of biological role, antiporter that mediates the import of reduced folates, driven by the export of organic anions. Also acts as an importer of immunoreactive cyclic dinucleotides, but with a lower transporter activity. Mechanistically, acts as a secondary active transporter, which exports intracellular organic anions down their concentration gradients to facilitate the uptake of its substrates. Has high affinity for N5-methyltetrahydrofolate, the predominant circulating form of folate. Also mediates the import of antifolate drug methotrexate. 5-amino-4-imidazolecarboxamide riboside (AICAR), when phosphorylated to AICAR monophosphate, can serve as an organic anion for antiporter activity. This is Reduced folate transporter from Mus musculus (Mouse).